We begin with the raw amino-acid sequence, 1170 residues long: DNA-directed RNA polymerase subunit beta (1170 aa).

The protein belongs to the RNA polymerase beta chain family. As to quaternary structure, the RNAP catalytic core consists of 2 alpha, 1 beta, 1 beta' and 1 omega subunit. When a sigma factor is associated with the core the holoenzyme is formed, which can initiate transcription.

The catalysed reaction is RNA(n) + a ribonucleoside 5'-triphosphate = RNA(n+1) + diphosphate. Functionally, DNA-dependent RNA polymerase catalyzes the transcription of DNA into RNA using the four ribonucleoside triphosphates as substrates. The polypeptide is DNA-directed RNA polymerase subunit beta (Corynebacterium urealyticum (strain ATCC 43042 / DSM 7109)).